Reading from the N-terminus, the 184-residue chain is Photosystem I assembly protein Ycf4 (184 aa).

Transmembrane regions (helical) follow at residues 21 to 43 (NFCW…ISSY) and 63 to 85 (GLVM…CAIS).

This sequence belongs to the Ycf4 family.

It localises to the plastid. The protein localises to the chloroplast thylakoid membrane. In terms of biological role, seems to be required for the assembly of the photosystem I complex. The sequence is that of Photosystem I assembly protein Ycf4 from Spinacia oleracea (Spinach).